The sequence spans 37 residues: Large ribosomal subunit protein bL36 (37 aa).

Belongs to the bacterial ribosomal protein bL36 family.

The protein is Large ribosomal subunit protein bL36 of Thioalkalivibrio sulfidiphilus (strain HL-EbGR7).